Consider the following 192-residue polypeptide: Epididymal-specific lipocalin-12 (192 aa).

Residues 1–19 form the signal peptide; the sequence is MRLLCGLWLWLSLLKVLQA. Cysteine 88 and cysteine 192 are disulfide-bonded.

This sequence belongs to the calycin superfamily. Lipocalin family. As to quaternary structure, monomer.

It is found in the secreted. Functionally, binds all-trans retinoic acid and may act as a retinoid carrier protein within the epididymis. May play a role in male fertility. This chain is Epididymal-specific lipocalin-12 (LCN12), found in Homo sapiens (Human).